A 276-amino-acid chain; its full sequence is ARL14 effector protein (276 aa).

The interval 158-177 (KQTEFAPEGGKREKRKLTKA) is disordered. Lysine 176 participates in a covalent cross-link: Glycyl lysine isopeptide (Lys-Gly) (interchain with G-Cter in SUMO2). A phosphoserine mark is found at serine 182 and serine 266.

In terms of assembly, interacts with ARL14 and MYO1E.

It localises to the cytoplasm. Through its interaction with ARL14 and MYO1E, may connect MHC class II-containing cytoplasmic vesicles to the actin network and hence controls the movement of these vesicles along the actin cytoskeleton in dendritic cells. In Mus musculus (Mouse), this protein is ARL14 effector protein (Arl14ep).